A 525-amino-acid chain; its full sequence is MATLLRSLALFKRNKDKPPITSGSGGAIRGIKHIIIVPIPGDSSITTRSRLLDRLVRLIGNPDVSGPKLTGALIGILSLFVESPGQLIQRITDDPDVSIRLLEVVQSDQSQSGLTFASRGTNMEDEADQYFSHDDPISSDQSRFGWFENKEISDIEVQDPEGFNMILGTILAQIWVLVAKAVTAPDTAADSELRRWIKYTQQRRVVGEFRLERKWLDVVRNRIAEDLSLRRFMVALILDIKRTPGNKPRIAEMICNIDTYIVEAGLASFILTIKFGIETMYPALGLHEFDGELSTLESLMNLYQQMGETAPYMVILENSIQNKFSAGSYPLLWSYAMGVGVELENSMGGLNFGRSYFDPAYFRLGQEMVRRSAGKVSSTLASELGITAEDARLVSEIAMHTTEDKISRAVGPRQAQVSFLHGDQSENELPRLGGKEDRRVKQSRGEARESYRETGPSRASDARAAHLPTGTPLDIDTASESSQDPQDSRRSADALLRLQAMAGISEEQGSDTDTPIVYNDRNLLD.

The segment at 1–36 (MATLLRSLALFKRNKDKPPITSGSGGAIRGIKHIII) is homomultimerization. The tract at residues 1 to 375 (MATLLRSLAL…QEMVRRSAGK (375 aa)) is RNA packaging and organization of the helical nucleocapsid. Residues 1–403 (MATLLRSLAL…VSEIAMHTTE (403 aa)) are ncore. Positions 70-77 (TGALIGIL) match the Nuclear localization signal motif. Residues Lys-180, Arg-195, Gln-202, and Tyr-260 each contribute to the RNA site. Thr-279 carries the phosphothreonine; by host modification. Asn-351 provides a ligand contact to RNA. A homomultimerization region spans residues 373-391 (AGKVSSTLASELGITAEDA). Ntail stretches follow at residues 401 to 525 (TTED…NLLD) and 404 to 525 (DKIS…NLLD). The tract at residues 418 to 525 (SFLHGDQSEN…IVYNDRNLLD (108 aa)) is disordered. The short motif at 425-440 (SENELPRLGGKEDRRV) is the Nuclear export signal element. Residues 433-452 (GGKEDRRVKQSRGEARESYR) are compositionally biased toward basic and acidic residues. The tract at residues 477-505 (TASESSQDPQDSRRSADALLRLQAMAGIS) is interaction with the phosphoprotein.

The protein belongs to the paramyxoviruses nucleocapsid family. Homomultimer; forms the nucleocapsid. Binds to viral genomic RNA. N0 interacts (via Ncore) with the phosphoprotein (via N-terminus); this interaction allows P to chaperon N0 to avoid N polymerization and non-specific RNA binding before encapsidation. Interacts (via the Ntail) as N-RNA template with the phosphoprotein (via C-terminus XD); this interaction maintains the P/L complex anchored to the nucleocapsid template during the sequential transcription. Interacts with the phosphoprotein; this interaction leads to the formation of membraneless organelles that function as viral replication factories. Interacts with human FCGR2B protein. Ntail binds to a protein on human thymic epithelial cells, termed Nucleoprotein Receptor (NR), inducing growth arrest. Interacts with human PPIA/CYPA and PPIB/CYPB. Phosphorylation at Thr-279 is required for the formation of the nucleocapsid.

It is found in the virion. The protein localises to the host cytoplasm. The protein resides in the host nucleus. In terms of biological role, forms the helical nucleocapsid (NC) in a ratio of 1 N per 6 ribonucleotides, protecting the genome from nucleases. The nucleocapsid (NC) has a helical structure with either 12.35 or 11.64 N per turn, approximately 20 nm in diameter, with a hollow central cavity approximately 5 nm in diameter. The encapsidated genomic RNA serves as template for transcription and replication; encapsidation by N is coupled to RNA synthesis. Forms the encapsidation complex with the phosphoprotein protein P. Before encapsidation, the newly synthesized free N protein, so-called N0, is chaperoned by P. Participates, together with P, in the formation of viral factories (viroplasms), which are large inclusions in the host cytoplasm where replication takes place. N is released in the blood following lysis of measles infected cells, it interacts then with human FCGR2B on immune cells, inducing apoptosis and blocking inflammatory immune response. This is Nucleoprotein (N) from Homo sapiens (Human).